The following is a 1021-amino-acid chain: Multidrug resistance protein MdtC (1021 aa).

The Cytoplasmic segment spans residues 1-6; that stretch reads MKFFAL. A helical transmembrane segment spans residues 7 to 29; sequence FIYRPVATILLSVAITLCGILGF. Residues 30 to 335 are Periplasmic-facing; the sequence is RMLPVAPLPQ…TIRASLEEVE (306 aa). A helical transmembrane segment spans residues 336–353; it reads QTLIISVALVILVVFLFL. Residues 354-359 lie on the Cytoplasmic side of the membrane; sequence RSGRAT. The chain crosses the membrane as a helical span at residues 360–379; that stretch reads IIPAVAVPVSLIGTFAAMYL. Over 380-388 the chain is Periplasmic; sequence CGFSLNNLS. A helical transmembrane segment spans residues 389–411; that stretch reads LMALTIATGFVVDDAIVVLENIA. Residues 412-430 are Cytoplasmic-facing; the sequence is RHLEAGMKPLQAALQGTRE. Residues 431–453 form a helical membrane-spanning segment; it reads VGFTVLSMSLSLVAVFLPLLLMG. Residues 454–467 are Periplasmic-facing; it reads GLPGRLLREFAVTL. Residues 468 to 490 traverse the membrane as a helical segment; the sequence is SVAIGISLLVSLTLTPMMCGWML. At 491 to 848 the chain is on the cytoplasmic side; the sequence is KASKPREQKR…QVFQETMNSQ (358 aa). A helical membrane pass occupies residues 849 to 871; the sequence is VILIIAAIATVYIVLGILYESYV. Topologically, residues 872-890 are periplasmic; that stretch reads HPLTILSTLPSAGVGALLA. The helical transmembrane segment at 891–913 threads the bilayer; the sequence is LELFNAPFSLIALIGIMLLIGIV. The Cytoplasmic portion of the chain corresponds to 914–943; it reads KKNAIMMVDFALEAQRHGNLTPQEAIFQAC. The helical transmembrane segment at 944 to 966 threads the bilayer; the sequence is LLRFRPIMMTTLAALFGALPLVL. The Periplasmic portion of the chain corresponds to 967-980; the sequence is SGGDGSELRQPLEI. Residues 981–1003 traverse the membrane as a helical segment; the sequence is TIVGGLVMSQLLTLYTTPVVYLF. At 1004–1021 the chain is on the cytoplasmic side; sequence FDRLRLRFSRKPKQTVTE.

This sequence belongs to the resistance-nodulation-cell division (RND) (TC 2.A.6) family. MdtC subfamily. As to quaternary structure, part of a tripartite efflux system composed of MdtA, MdtB and MdtC. MdtC forms a heteromultimer with MdtB.

The protein localises to the cell inner membrane. This chain is Multidrug resistance protein MdtC, found in Shigella flexneri.